Consider the following 309-residue polypeptide: Movement protein (309 aa).

Residues 245–273 form a disordered region; the sequence is HLSLNESKTLPSTSTTEAEGSERRIHIGA. Residues 246-262 are compositionally biased toward polar residues; that stretch reads LSLNESKTLPSTSTTEA.

The protein resides in the host cell junction. It is found in the host plasmodesma. In terms of biological role, transports viral genome to neighboring plant cells directly through plasmosdesmata, without any budding. The movement protein allows efficient cell to cell propagation, by bypassing the host cell wall barrier. Acts by forming a tubular structure at the host plasmodesmata, enlarging it enough to allow free passage of virion capsids. The chain is Movement protein from Solanum lycopersicum (Tomato).